Reading from the N-terminus, the 687-residue chain is Probable WRKY transcription factor 2 (687 aa).

Positions 197-276 are disordered; that stretch reads YGNYNNRSSS…AGGAPAEDGY (80 aa). 2 stretches are compositionally biased toward polar residues: residues 199–208 and 219–249; these read NYNNRSSSHQ and NIES…TSLE. The WRKY 1 DNA-binding region spans 267–331; the sequence is AGGAPAEDGY…YKGAHNHLKP (65 aa). Positions 298, 303, 326, and 328 each coordinate Zn(2+). 2 disordered regions span residues 324 to 384 and 416 to 453; these read GAHN…STRF and FSND…ESKR. Residues 354–379 are compositionally biased toward polar residues; the sequence is RDSAATWVSCNNTQQQGGSNENNVEE. A compositionally biased stretch (gly residues) spans 435-444; that stretch reads YDGGGGGGGG. Residues 481–546 constitute a DNA-binding region (WRKY 2); that stretch reads SDVDILDDGY…YEGKHNHDVP (66 aa). Zn(2+) contacts are provided by Cys-512, Cys-517, His-541, and His-543. Residues 537-599 are disordered; that stretch reads YEGKHNHDVP…QVTTNNQSPF (63 aa). Residues 553–565 show a composition bias toward gly residues; sequence HGGGGDSGNGNSG. Residues 578 to 589 are compositionally biased toward basic and acidic residues; that stretch reads HHSEPPRGRFDR. Residues 590–599 are compositionally biased toward polar residues; sequence QVTTNNQSPF.

Belongs to the WRKY group I family. Low expression in senescent leaves. Expressed in both the unfertilized egg cell and the pollen tube.

Its subcellular location is the nucleus. Transcription factor. Regulates WOX8 and WOX9 expression and basal cell division patterns during early embryogenesis. Interacts specifically with the W box (5'-(T)TGAC[CT]-3'), a frequently occurring elicitor-responsive cis-acting element. Required to repolarize the zygote from a transient symmetric state. In Arabidopsis thaliana (Mouse-ear cress), this protein is Probable WRKY transcription factor 2.